The chain runs to 359 residues: Phosphoserine aminotransferase (359 aa).

Arg42 provides a ligand contact to L-glutamate. Pyridoxal 5'-phosphate is bound by residues 76 to 77 (AS), Trp102, Thr151, Asp170, and Gln193. Lys194 is modified (N6-(pyridoxal phosphate)lysine). 235–236 (NT) lines the pyridoxal 5'-phosphate pocket.

The protein belongs to the class-V pyridoxal-phosphate-dependent aminotransferase family. SerC subfamily. In terms of assembly, homodimer. It depends on pyridoxal 5'-phosphate as a cofactor.

The protein resides in the cytoplasm. It carries out the reaction O-phospho-L-serine + 2-oxoglutarate = 3-phosphooxypyruvate + L-glutamate. The catalysed reaction is 4-(phosphooxy)-L-threonine + 2-oxoglutarate = (R)-3-hydroxy-2-oxo-4-phosphooxybutanoate + L-glutamate. Its pathway is amino-acid biosynthesis; L-serine biosynthesis; L-serine from 3-phospho-D-glycerate: step 2/3. It participates in cofactor biosynthesis; pyridoxine 5'-phosphate biosynthesis; pyridoxine 5'-phosphate from D-erythrose 4-phosphate: step 3/5. Catalyzes the reversible conversion of 3-phosphohydroxypyruvate to phosphoserine and of 3-hydroxy-2-oxo-4-phosphonooxybutanoate to phosphohydroxythreonine. This Bacillus subtilis (strain 168) protein is Phosphoserine aminotransferase (serC).